The chain runs to 331 residues: Probable allantoicase (331 aa).

The protein belongs to the allantoicase family.

The catalysed reaction is allantoate + H2O = (S)-ureidoglycolate + urea. It functions in the pathway nitrogen metabolism; (S)-allantoin degradation; (S)-ureidoglycolate from allantoate (aminidohydrolase route): step 1/1. The sequence is that of Probable allantoicase from Pseudomonas syringae pv. syringae (strain B728a).